A 707-amino-acid polypeptide reads, in one-letter code: MSSALRSRARSASLGTTTQGWDPPPLRRPSRARRRQWMREAAQAAAQAAVQAAQAAAAQVAQAHVDENEVVDLMADEAGGGVTTLTTLSSVSTTTVLGHATFSACVRSDVMRDGEKEDAASDKENLRRPVVPSTSSRGSAASGDGYHGLRCRETSAMWSFEYDRDGDVTSVRRALFTGGSDPSDSVSGVRGGRKRPLRPPLVSLARTPLCRRRVGGVDAVLEENDVELRAESQDSAVASGPGRIPQPLSGSSGEESATAVEADSTSHDDVHCTCSNDQIITTSIRGLTCDPRMFLRLTHPELCELSISYLLVYVPKEDDFCHKICYAVDMSDESYRLGQGSFGEVWPLDRYRVVKVARKHSETVLTVWMSGLIRTRAAGEQQQPPSLVGTGVHRGLLTATGCCLLHNVTVHRRFHTDMFHHDQWKLACIDSYRRAFCTLADAIKFLNHQCRVCHFDITPMNVLIDVNPHNPSEIVRAALCDYSLSEPYPDYNERCVAVFQETGTARRIPNCSHRLRECYHPAFRPMPLQKLLICDPHARFPVAGLRRYCMSELSALGNVLGFCLMRLLDRRGLDEVRMGTEALLFKHAGAACRALENGKLTHCSDACLLILAAQMSYGACLLGEHGAALVSHTLRFVEAKMSSCRVRAFRRFYHECSQTMLHEYVRKNVERLLATSDGLYLYNAFRRTTSIICEEDLDGDCRQLFPE.

The span at 1 to 14 (MSSALRSRARSASL) shows a compositional bias: low complexity. 4 disordered regions span residues 1-33 (MSSALRSRARSASLGTTTQGWDPPPLRRPSRAR), 113-146 (DGEKEDAASDKENLRRPVVPSTSSRGSAASGDGY), 176-198 (FTGGSDPSDSVSGVRGGRKRPLR), and 231-264 (ESQDSAVASGPGRIPQPLSGSSGEESATAVEADS). Over residues 113–127 (DGEKEDAASDKENLR) the composition is skewed to basic and acidic residues. A compositionally biased stretch (low complexity) spans 178–188 (GGSDPSDSVSG). Residues 337 to 345 (LGQGSFGEV) and lysine 359 contribute to the ATP site. The active-site Proton acceptor is aspartate 456.

It belongs to the protein kinase superfamily. Tyr protein kinase family. HCMV ganciclovir subfamily. As to quaternary structure, interacts with UL83. Autophosphorylates on serine and threonine residues.

The protein resides in the virion. The enzyme catalyses L-seryl-[protein] + ATP = O-phospho-L-seryl-[protein] + ADP + H(+). It carries out the reaction L-threonyl-[protein] + ATP = O-phospho-L-threonyl-[protein] + ADP + H(+). Functionally, serine/threonine protein kinase that plays important roles in several processes including nuclear viral egress, viral replication or regulation of host cell cycle progression. Participates in the acquisition of tegument during virion morphogenesis in the nucleus. Phosphorylates the viral nuclear egress complex (NEC) subunits UL50 and UL53. Redistributes the host nuclear lamina by phosphorylating cellular Lamins-A/C. Plays a role in viral DNA synthesis by phosphorylating the DNA polymerase processivity factor UL44. Stimulates host cell cycle to support viral DNA synthesis by phosphorylating host retinoblastoma/RB1 protein. Additional substrates have been identified including host EF1D or H2B. Also phosphorylates host SAMHD1 and thereby counteracts its antiviral effect by reducing its dNTP hydrolase activity. This is Serine/threonine protein kinase UL97 (UL97) from Human cytomegalovirus (strain AD169) (HHV-5).